The chain runs to 309 residues: Probable manganese-dependent inorganic pyrophosphatase (309 aa).

Mn(2+)-binding residues include H9, D13, D15, D75, H97, and D149.

Belongs to the PPase class C family. The cofactor is Mn(2+).

The protein resides in the cytoplasm. The enzyme catalyses diphosphate + H2O = 2 phosphate + H(+). The protein is Probable manganese-dependent inorganic pyrophosphatase of Staphylococcus epidermidis (strain ATCC 35984 / DSM 28319 / BCRC 17069 / CCUG 31568 / BM 3577 / RP62A).